Consider the following 177-residue polypeptide: CASP-like protein 2U1 (177 aa).

A helical membrane pass occupies residues Met1–Asp21. The Cytoplasmic portion of the chain corresponds to Lys22 to Tyr48. A helical transmembrane segment spans residues Leu49–Phe69. Over Arg70–Ser80 the chain is Extracellular. A helical transmembrane segment spans residues Ala81–Ala101. The Cytoplasmic segment spans residues Ala102–Asn131. A helical membrane pass occupies residues Leu132 to Val152. Residues Met153 to Ile177 lie on the Extracellular side of the membrane.

Belongs to the Casparian strip membrane proteins (CASP) family. In terms of assembly, homodimer and heterodimers.

The protein localises to the cell membrane. This Osmunda lancea (Fern) protein is CASP-like protein 2U1.